The following is a 138-amino-acid chain: Basic phospholipase A2 ammodytoxin B (138 aa).

Positions 1 to 16 (MRTLWIVAVCLIGVEG) are cleaved as a signal peptide. 7 cysteine pairs are disulfide-bonded: C42–C131, C44–C60, C59–C111, C65–C138, C66–C104, C73–C97, and C91–C102. Ca(2+) is bound by residues Y43, G45, and G47. H63 is an active-site residue. D64 contacts Ca(2+). The active site involves D105.

Belongs to the phospholipase A2 family. Group II subfamily. D49 sub-subfamily. As to quaternary structure, monomer. Binds to calmodulin, coagulation factor X (F10), M-type PLA2 receptor (R-180), 14-3-3 proteins gamma (YWHAG) and epsilon (YWHAE), and R25, a mitochondrial membrane protein. Ca(2+) is required as a cofactor. As to expression, expressed by the venom gland.

The protein resides in the secreted. It localises to the host cytoplasm. The protein localises to the host cytosol. It carries out the reaction a 1,2-diacyl-sn-glycero-3-phosphocholine + H2O = a 1-acyl-sn-glycero-3-phosphocholine + a fatty acid + H(+). In terms of biological role, snake venom phospholipase A2 (PLA2) that acts as a presynaptic neurotoxin, an inhibitor of blood coagulation, and has been found to bind with high affinity to intracellular proteins. The response of indirectly stimulated neuromuscular preparations to ammodytoxin (Atx) is triphasic. The first phase, the transient inhibition of the acetylcholine (ACh) release, starts soon after the addition of Atx and lasts for several minutes. This phase is probably independent of Atx enzymatic activity. The effect may be due to the specific binding of the toxin to presynaptic receptors. These receptors, called N-type receptors, are still unidentified. It is noteworthy that a neuronal isoform of the M-type PLA2 receptor (R180) has been identified as a high-affinity receptor for Atx in neuronal plasma membranes. It was demonstrated however that this receptor is not essential for expression of neurotoxicity by Atx. The second phase corresponds to an augmentation of neurotransmitter release. A peak is reached 10-20 minutes after exposure of the preparation to Atx and is followed by a gradual reduction. In this phase, the enzymatic activity of Atx of the mammalian is not significant. It is speculated that the increased release of neurotransmitter in this phase is induced by the interference of Atx with voltage-gated potassium channels. Measurements of ionic currents showed however that voltage-gated potassium channels are not affected by Atx. The third phase of the response of neuromuscular preparations to Atx, which corresponds to a complete and irreversible paralysis, is clearly dependent on the hydrolytic activity of the toxin. In addition to its presynaptic neurotoxicity, Atx shows an anticoagulant activity by binding with high affinity to activated coagulation factor X (F10) thus inhibiting the formation of the prothrombinase complex (FX/FV) and its activity (IC(50) is 82 nM). Surprisingly, Atx was discovered to bind intracellular proteins such as calmodulin (CaM), 14-3-3 proteins gamma (YWHAG) and epsilon (YWHAE) (by similarity with AtxC), as well as R25 (by similarity with AtxC), a mitochondrial integral membrane protein found in cerebral cortex. These findings raised a doubt about the dogma of the exclusively extracellular action of PLA2s, defended by the potential instability of these molecules in the reducing environment of the eukaryotic cytosol coupled with their possible inability to act as enzymes in this cellular compartment, due to too low concentration of calcium ions. This hypothesis was challenged efficiently by demonstrating the internalization of AtxA into a culture cells, but still remains to be directly demonstrated in vivo. PLA2 catalyzes the calcium-dependent hydrolysis of the 2-acyl groups in 3-sn-phosphoglycerides. This is Basic phospholipase A2 ammodytoxin B from Vipera ammodytes ammodytes (Western sand viper).